The primary structure comprises 147 residues: Alpha-amylase/trypsin inhibitor (147 aa).

Residues 1–21 (MASDHRRFVLSGAVLLSVLAV) form the signal peptide.

Belongs to the protease inhibitor I6 (cereal trypsin/alpha-amylase inhibitor) family. Post-translationally, five disulfide bonds, which are essential for the inhibitor activity, are probably present. In terms of tissue distribution, endosperm.

Its subcellular location is the secreted. Its function is as follows. Alpha-amylase/trypsin inhibitor. In Hordeum vulgare (Barley), this protein is Alpha-amylase/trypsin inhibitor.